A 311-amino-acid chain; its full sequence is Methionyl-tRNA formyltransferase (311 aa).

(6S)-5,6,7,8-tetrahydrofolate is bound at residue Ser-112–Pro-115.

This sequence belongs to the Fmt family.

It catalyses the reaction L-methionyl-tRNA(fMet) + (6R)-10-formyltetrahydrofolate = N-formyl-L-methionyl-tRNA(fMet) + (6S)-5,6,7,8-tetrahydrofolate + H(+). Its function is as follows. Attaches a formyl group to the free amino group of methionyl-tRNA(fMet). The formyl group appears to play a dual role in the initiator identity of N-formylmethionyl-tRNA by promoting its recognition by IF2 and preventing the misappropriation of this tRNA by the elongation apparatus. This is Methionyl-tRNA formyltransferase from Rhizobium meliloti (strain 1021) (Ensifer meliloti).